A 286-amino-acid chain; its full sequence is Elongation factor Ts (286 aa).

Positions 82-85 (TDFV) are involved in Mg(2+) ion dislocation from EF-Tu.

The protein belongs to the EF-Ts family.

The protein resides in the cytoplasm. Its function is as follows. Associates with the EF-Tu.GDP complex and induces the exchange of GDP to GTP. It remains bound to the aminoacyl-tRNA.EF-Tu.GTP complex up to the GTP hydrolysis stage on the ribosome. This chain is Elongation factor Ts, found in Hamiltonella defensa subsp. Acyrthosiphon pisum (strain 5AT).